The primary structure comprises 424 residues: MAALAVLHGVVRRPLLRGLLQEVRCLGRSYASKPTLNDVVIVSATRTPIGSFLGSLASQPATKLGTIAIQGAIEKAGIPKEEVKEVYMGNVIQGGEGQAPTRQATLGAGLPIATPCTTVNKVCASGMKAIMMASQSLMCGHQDVMVAGGMESMSNVPYVMSRGATPYGGVKLEDLIVKDGLTDVYNKIHMGNCAENTAKKLSISREEQDKYAIGSYTRSKEAWDAGKFANEITPITISVKGKPDVVVKEDEEYKRVDFSKVPKLKTVFQKENGTVTAANASTLNDGAAAVVLMTAEAAQRLKVKPLARIAAFADAAVDPIDFPLAPAYAVPKVLKYAGLKKEDIAMWEVNEAFSVVVLANIKMLEIDPQKVNVHGGAVSLGHPIGMSGARIVVHLAHALKQGEFGLASICNGGGGASAVLIEKL.

The N-terminal 30 residues, 1–30 (MAALAVLHGVVRRPLLRGLLQEVRCLGRSY), are a transit peptide targeting the mitochondrion. An N6-acetyllysine; alternate modification is found at K63. The residue at position 63 (K63) is an N6-succinyllysine; alternate. K75 is subject to N6-succinyllysine. Residue C123 is the Acyl-thioester intermediate of the active site. K171, K178, K187, and K199 each carry N6-acetyllysine; alternate. K171, K178, K187, and K199 each carry N6-succinyllysine; alternate. Phosphoserine is present on S204. Residue Y216 coordinates CoA. K(+) is bound at residue Y216. An N6-acetyllysine; alternate mark is found at K220 and K227. K220 and K227 each carry N6-succinyllysine; alternate. At K240 the chain carries N6-succinyllysine. An N6-acetyllysine; alternate modification is found at K242. K242 is subject to N6-succinyllysine; alternate. K248 and K254 each carry N6-acetyllysine. Residues 255–257 (RVD) and K260 each bind CoA. K260 is subject to N6-acetyllysine; alternate. K260 carries the N6-succinyllysine; alternate modification. N6-succinyllysine occurs at positions 263 and 265. K270 carries the post-translational modification N6-acetyllysine. K(+)-binding residues include A277, A278, and A280. CoA is bound at residue S281. Position 335 is an N6-acetyllysine (K335). V378 provides a ligand contact to K(+). The Proton donor/acceptor role is filled by C410.

The protein belongs to the thiolase-like superfamily. Thiolase family. Homotetramer. Post-translationally, succinylation at Lys-265, adjacent to a coenzyme A binding site. Desuccinylated by SIRT5.

The protein localises to the mitochondrion. The catalysed reaction is 2 acetyl-CoA = acetoacetyl-CoA + CoA. It carries out the reaction propanoyl-CoA + acetyl-CoA = 2-methyl-3-oxobutanoyl-CoA + CoA. It participates in lipid metabolism; fatty acid beta-oxidation. Activated by potassium ions, but not sodium ions. In terms of biological role, this is one of the enzymes that catalyzes the last step of the mitochondrial beta-oxidation pathway, an aerobic process breaking down fatty acids into acetyl-CoA. Using free coenzyme A/CoA, catalyzes the thiolytic cleavage of medium- to long-chain 3-oxoacyl-CoAs into acetyl-CoA and a fatty acyl-CoA shortened by two carbon atoms. The activity of the enzyme is reversible and it can also catalyze the condensation of two acetyl-CoA molecules into acetoacetyl-CoA. Thereby, it plays a major role in ketone body metabolism. The polypeptide is Acetyl-CoA acetyltransferase, mitochondrial (Acat1) (Rattus norvegicus (Rat)).